Reading from the N-terminus, the 135-residue chain is Ribosome-binding factor A (135 aa).

Belongs to the RbfA family. As to quaternary structure, monomer. Binds 30S ribosomal subunits, but not 50S ribosomal subunits or 70S ribosomes.

Its subcellular location is the cytoplasm. One of several proteins that assist in the late maturation steps of the functional core of the 30S ribosomal subunit. Associates with free 30S ribosomal subunits (but not with 30S subunits that are part of 70S ribosomes or polysomes). Required for efficient processing of 16S rRNA. May interact with the 5'-terminal helix region of 16S rRNA. The sequence is that of Ribosome-binding factor A from Aliivibrio salmonicida (strain LFI1238) (Vibrio salmonicida (strain LFI1238)).